We begin with the raw amino-acid sequence, 483 residues long: Regulatory protein ViaA (483 aa).

It belongs to the ViaA family. In terms of assembly, homodimer. Interacts with RavA.

It localises to the cytoplasm. Component of the RavA-ViaA chaperone complex, which may act on the membrane to optimize the function of some of the respiratory chains. ViaA stimulates the ATPase activity of RavA. In Salmonella schwarzengrund (strain CVM19633), this protein is Regulatory protein ViaA.